Reading from the N-terminus, the 398-residue chain is Phosphoglycerate kinase (398 aa).

Substrate-binding positions include 21–23 (DFN), R36, 59–62 (HLGR), R119, and R157. Residues K208, G296, E327, and 354 to 357 (GGDS) each bind ATP.

This sequence belongs to the phosphoglycerate kinase family. Monomer.

It localises to the cytoplasm. It catalyses the reaction (2R)-3-phosphoglycerate + ATP = (2R)-3-phospho-glyceroyl phosphate + ADP. It participates in carbohydrate degradation; glycolysis; pyruvate from D-glyceraldehyde 3-phosphate: step 2/5. This chain is Phosphoglycerate kinase, found in Streptococcus pneumoniae serotype 4 (strain ATCC BAA-334 / TIGR4).